The sequence spans 78 residues: Acyl carrier protein (78 aa).

The Carrier domain maps to 2-77; that stretch reads SDIEARVKKI…NAIDYANTHQ (76 aa). An O-(pantetheine 4'-phosphoryl)serine modification is found at Ser37.

Belongs to the acyl carrier protein (ACP) family. 4'-phosphopantetheine is transferred from CoA to a specific serine of apo-ACP by AcpS. This modification is essential for activity because fatty acids are bound in thioester linkage to the sulfhydryl of the prosthetic group.

The protein localises to the cytoplasm. It functions in the pathway lipid metabolism; fatty acid biosynthesis. Functionally, carrier of the growing fatty acid chain in fatty acid biosynthesis. The polypeptide is Acyl carrier protein (Comamonas testosteroni (Pseudomonas testosteroni)).